We begin with the raw amino-acid sequence, 85 residues long: MANIKSAIKRAKLSEERRAHNASIKSDMRTAVKTVEALVSNNDLENAKEAFKTASKKLDKAARKGLIHQNAAARQKSRLAKKVNA.

Positions 1–22 (MANIKSAIKRAKLSEERRAHNA) are disordered.

This sequence belongs to the bacterial ribosomal protein bS20 family.

Functionally, binds directly to 16S ribosomal RNA. This chain is Small ribosomal subunit protein bS20, found in Bacillus cytotoxicus (strain DSM 22905 / CIP 110041 / 391-98 / NVH 391-98).